A 149-amino-acid chain; its full sequence is Large ribosomal subunit protein bL9 (149 aa).

Belongs to the bacterial ribosomal protein bL9 family.

Its function is as follows. Binds to the 23S rRNA. This is Large ribosomal subunit protein bL9 from Christiangramia forsetii (strain DSM 17595 / CGMCC 1.15422 / KT0803) (Gramella forsetii).